Here is a 468-residue protein sequence, read N- to C-terminus: UDP-N-acetylmuramoyl-L-alanine--L-glutamate ligase (468 aa).

122-128 (GTKGKST) serves as a coordination point for ATP.

It belongs to the MurCDEF family. MurD2 subfamily.

It localises to the cytoplasm. The enzyme catalyses UDP-N-acetyl-alpha-D-muramoyl-L-alanine + L-glutamate + ATP = UDP-N-acetyl-alpha-D-muramoyl-L-alanyl-L-glutamate + ADP + phosphate + H(+). It functions in the pathway cell wall biogenesis; peptidoglycan biosynthesis. Cell wall formation. Catalyzes the addition of L-glutamate to the nucleotide precursor UDP-N-acetylmuramoyl-L-alanine. This Xanthomonas axonopodis pv. citri (strain 306) protein is UDP-N-acetylmuramoyl-L-alanine--L-glutamate ligase.